A 287-amino-acid polypeptide reads, in one-letter code: Putative ankyrin repeat protein R791 (287 aa).

ANK repeat units follow at residues 40–71, 76–105, 107–134, 135–164, 165–194, 196–224, and 225–254; these read HNFN…PLVF, NVHD…NIET, NDDV…IDNK, TIFE…DIKA, KDNF…TIDI, DDTY…DYRT, and VDDL…DIEA.

This Acanthamoeba polyphaga (Amoeba) protein is Putative ankyrin repeat protein R791.